We begin with the raw amino-acid sequence, 280 residues long: 30 kDa immediate-early protein 2 (280 aa).

The segment at 36–164 (SEEEQGEEVE…KKSKRISELD (129 aa)) is disordered. Composition is skewed to low complexity over residues 47–67 (RGATASSPSTGSGTPRVTSPT), 90–101 (SSSSSSCSSASD), and 132–147 (AASSSLLSCGHQSSGG).

Activates the E1.7 promoter. This activation is augmented by the IE1 protein. It down-regulates the transcription of genes under the control of the major IE promoter. This Human cytomegalovirus (strain Towne) (HHV-5) protein is 30 kDa immediate-early protein 2 (UL122).